Here is a 468-residue protein sequence, read N- to C-terminus: Chromatin assembly factor 1 subunit B (468 aa).

WD repeat units lie at residues 11–52 (HDSQ…NGQN), 69–108 (HHEQAINVIRFNSKGDVLASAGDDGQVLLWKQEDPNTQQE), 143–182 (TAAAEIYDLAWSPDNRNIVVACMDNSIRLFDVGAGMLVCG), 185–224 (DHGHYVQGVAWDPLNQFILSQSADRSLHVYGVILSSAGVV), and 371–413 (IHYS…SRIE).

This sequence belongs to the WD repeat HIR1 family. In terms of assembly, component of chromatin assembly factor 1 (CAF-1), composed of MSI1/p50, CAC2/p60 and CAC1/p90. Interacts with RTT106.

It is found in the nucleus. In terms of biological role, acts as a component of the histone chaperone complex chromatin assembly factor 1 (CAF-1), which assembles histone octamers onto replicating DNA. It performs the first step of the nucleosome assembly process, bringing newly synthesized histones H3 and H4 to replicating DNA; histones H2A/H2B can bind to this chromatin precursor subsequent to DNA replication to complete the histone octamer. Plays a role in the maintenance of heterochromatin. This Saccharomyces cerevisiae (strain ATCC 204508 / S288c) (Baker's yeast) protein is Chromatin assembly factor 1 subunit B (CAC2).